The primary structure comprises 428 residues: Light-independent protochlorophyllide reductase subunit N (428 aa).

Cys-31, Cys-56, and Cys-117 together coordinate [4Fe-4S] cluster.

The protein belongs to the BchN/ChlN family. As to quaternary structure, protochlorophyllide reductase is composed of three subunits; BchL, BchN and BchB. Forms a heterotetramer of two BchB and two BchN subunits. Requires [4Fe-4S] cluster as cofactor.

It catalyses the reaction chlorophyllide a + oxidized 2[4Fe-4S]-[ferredoxin] + 2 ADP + 2 phosphate = protochlorophyllide a + reduced 2[4Fe-4S]-[ferredoxin] + 2 ATP + 2 H2O. It functions in the pathway porphyrin-containing compound metabolism; bacteriochlorophyll biosynthesis (light-independent). In terms of biological role, component of the dark-operative protochlorophyllide reductase (DPOR) that uses Mg-ATP and reduced ferredoxin to reduce ring D of protochlorophyllide (Pchlide) to form chlorophyllide a (Chlide). This reaction is light-independent. The NB-protein (BchN-BchB) is the catalytic component of the complex. This is Light-independent protochlorophyllide reductase subunit N from Rhodopseudomonas palustris (strain BisB18).